We begin with the raw amino-acid sequence, 90 residues long: Large ribosomal subunit protein bL27 (90 aa).

Belongs to the bacterial ribosomal protein bL27 family.

This is Large ribosomal subunit protein bL27 from Rhodopseudomonas palustris (strain BisB5).